We begin with the raw amino-acid sequence, 467 residues long: UDP-N-acetylmuramoylalanine--D-glutamate ligase (467 aa).

Gly-118–Thr-124 is an ATP binding site.

Belongs to the MurCDEF family.

It localises to the cytoplasm. It catalyses the reaction UDP-N-acetyl-alpha-D-muramoyl-L-alanine + D-glutamate + ATP = UDP-N-acetyl-alpha-D-muramoyl-L-alanyl-D-glutamate + ADP + phosphate + H(+). It functions in the pathway cell wall biogenesis; peptidoglycan biosynthesis. In terms of biological role, cell wall formation. Catalyzes the addition of glutamate to the nucleotide precursor UDP-N-acetylmuramoyl-L-alanine (UMA). This Streptomyces avermitilis (strain ATCC 31267 / DSM 46492 / JCM 5070 / NBRC 14893 / NCIMB 12804 / NRRL 8165 / MA-4680) protein is UDP-N-acetylmuramoylalanine--D-glutamate ligase.